Consider the following 316-residue polypeptide: MNQLEALKQFTVVVADSGDIDSIRQFSPQDATTNPSLILKAATLPQYQPLFDDAIAYANLQGGSPETRLINASDRLAVNIGAEVLKSIPGRISTEVDARLSFDRGMCVAKARKLIGMYQEKDIPRSRILIKLAATWEGIRAAEELEKEGINCNLTLLFSFAQARACAEAGVFLISPFVGRIYDWYQEKQPTSDYQAESDPGVISVRDIYDYYKRHRYQTVIMGASFRKVEQILALAGCDRLTISPALLEQLKNSSDPVERQLTPSTEAFHPPSPLSEAEFRWEHHQDAMAVDKLAEGIRLFAADQQKLEALLAAKL.

The active-site Schiff-base intermediate with substrate is the Lys-131.

This sequence belongs to the transaldolase family. Type 1 subfamily. Homodimer.

The protein localises to the cytoplasm. It catalyses the reaction D-sedoheptulose 7-phosphate + D-glyceraldehyde 3-phosphate = D-erythrose 4-phosphate + beta-D-fructose 6-phosphate. The protein operates within carbohydrate degradation; pentose phosphate pathway; D-glyceraldehyde 3-phosphate and beta-D-fructose 6-phosphate from D-ribose 5-phosphate and D-xylulose 5-phosphate (non-oxidative stage): step 2/3. Its function is as follows. Transaldolase is important for the balance of metabolites in the pentose-phosphate pathway. The chain is Transaldolase 1 from Pectobacterium atrosepticum (strain SCRI 1043 / ATCC BAA-672) (Erwinia carotovora subsp. atroseptica).